The sequence spans 755 residues: von Willebrand factor A domain-containing protein 2 (755 aa).

An N-terminal signal peptide occupies residues 1 to 23 (MPPFLLLEAVCVFLFSRVPPSLP). Residues 51 to 222 (DIMFLLDGSN…DATNGLFSTL (172 aa)) enclose the VWFA 1 domain. Asn147 is a glycosylation site (N-linked (GlcNAc...) asparagine). Residues 296–333 (PGPCDSQPCQNGGTCVPEGLDGYQCLCPLAFGGEANCA) enclose the EGF-like 1 domain. 3 disulfides stabilise this stretch: Cys299–Cys310, Cys304–Cys320, and Cys322–Cys332. VWFA domains follow at residues 343–517 (DLLF…QGKL) and 531–705 (DLVF…IEWL). The 37-residue stretch at 712 to 748 (PVNLCKPSPCMNEGSCVLQNGSYRCKCRDGWEGPHCE) folds into the EGF-like 2 domain. Disulfide bonds link Cys716–Cys727, Cys721–Cys736, and Cys738–Cys747.

Forms monomers and multimers. A 55 kDa form is produced by proteolytic cleavage. In terms of tissue distribution, expression is generally absent in normal colon and other normal body tissues, but it is induced an average of 78-fold in Stage II, III, and IV colon cancers, as well as in colon adenomas and colon cancer cell lines.

Its subcellular location is the secreted. In Homo sapiens (Human), this protein is von Willebrand factor A domain-containing protein 2 (VWA2).